We begin with the raw amino-acid sequence, 421 residues long: NADH-quinone oxidoreductase subunit F (421 aa).

Residues 1-25 are disordered; that stretch reads MLKEEDKIFTNLHGQQSHDLKSSKK. The span at 16–25 shows a compositional bias: basic and acidic residues; it reads QSHDLKSSKK. 54-63 is a binding site for NAD(+); sequence GRGGAGFSTG. 166–213 lines the FMN pocket; it reads GAGAYICGEETALLESLEGKKGMPRLKPPFPAGFGLYGCPTTINNVES. 4 residues coordinate [4Fe-4S] cluster: Cys344, Cys347, Cys350, and Cys390.

This sequence belongs to the complex I 51 kDa subunit family. FMN is required as a cofactor. [4Fe-4S] cluster serves as cofactor.

The enzyme catalyses a quinone + NADH + 5 H(+)(in) = a quinol + NAD(+) + 4 H(+)(out). Functionally, NDH-1 shuttles electrons from NADH, via FMN and iron-sulfur (Fe-S) centers, to quinones in the respiratory chain. Couples the redox reaction to proton translocation (for every two electrons transferred, four hydrogen ions are translocated across the cytoplasmic membrane), and thus conserves the redox energy in a proton gradient. In Rickettsia massiliae (strain Mtu5), this protein is NADH-quinone oxidoreductase subunit F (nuoF).